The chain runs to 634 residues: Probable potassium transport system protein Kup (634 aa).

The next 12 helical transmembrane spans lie at Leu-21–Leu-41, Val-58–Val-78, Met-110–Ile-130, Pro-152–Gly-172, Ala-179–Met-199, Trp-223–Tyr-243, Trp-258–Leu-278, Ala-296–Ile-316, Ile-348–Phe-368, Ala-377–Ala-397, Val-403–Phe-423, and Ile-427–Leu-447.

It belongs to the HAK/KUP transporter (TC 2.A.72) family.

It is found in the cell inner membrane. The enzyme catalyses K(+)(in) + H(+)(in) = K(+)(out) + H(+)(out). In terms of biological role, transport of potassium into the cell. Likely operates as a K(+):H(+) symporter. The sequence is that of Probable potassium transport system protein Kup from Xanthomonas euvesicatoria pv. vesicatoria (strain 85-10) (Xanthomonas campestris pv. vesicatoria).